The following is a 141-amino-acid chain: Hemoglobin subunit alpha-1 (141 aa).

In terms of domain architecture, Globin spans 1–141; it reads VLSPADKNNV…VSTVLTSKYR (141 aa). H58 serves as a coordination point for O2. A heme b-binding site is contributed by H87.

It belongs to the globin family. As to quaternary structure, heterotetramer of two alpha chains and two beta chains. As to expression, red blood cells.

Involved in oxygen transport from the lung to the various peripheral tissues. This chain is Hemoglobin subunit alpha-1, found in Varecia variegata (Black-and-white ruffed lemur).